Reading from the N-terminus, the 101-residue chain is Ubiquitin-related modifier 1 (101 aa).

G101 carries the post-translational modification 1-thioglycine. G101 participates in a covalent cross-link: Glycyl lysine isopeptide (Gly-Lys) (interchain with K-? in acceptor proteins).

It belongs to the URM1 family. In terms of assembly, component of a complex at least composed of URM1, CTU2/NCS2 and CTU1/ATPBD3. C-terminal thiocarboxylation occurs in 2 steps, it is first acyl-adenylated (-COAMP) via the hesA/moeB/thiF part of MOCS3, then thiocarboxylated (-COSH) via the rhodanese domain of MOCS3.

Its subcellular location is the cytoplasm. It functions in the pathway tRNA modification; 5-methoxycarbonylmethyl-2-thiouridine-tRNA biosynthesis. Its function is as follows. Acts as a sulfur carrier required for 2-thiolation of mcm(5)S(2)U at tRNA wobble positions of cytosolic tRNA(Lys), tRNA(Glu) and tRNA(Gln). Serves as sulfur donor in tRNA 2-thiolation reaction by being thiocarboxylated (-COSH) at its C-terminus by MOCS3. The sulfur is then transferred to tRNA to form 2-thiolation of mcm(5)S(2)U. Also acts as a ubiquitin-like protein (UBL) that is covalently conjugated via an isopeptide bond to lysine residues of target proteins such as MOCS3, ATPBD3, CTU2, USP15 and CAS. The thiocarboxylated form serves as substrate for conjugation and oxidative stress specifically induces the formation of UBL-protein conjugates. This Bos taurus (Bovine) protein is Ubiquitin-related modifier 1.